Consider the following 219-residue polypeptide: Transmembrane protein 179B (219 aa).

4 helical membrane-spanning segments follow: residues 6–26 (PLLL…ITAA), 69–89 (ISVC…YIAF), 105–125 (LGLS…LKIG), and 167–187 (AETA…LVLI). A disordered region spans residues 195–219 (IRPGTEDPSAPPSETEPFFNRPGRP).

This sequence belongs to the TMEM179 family.

It localises to the membrane. This is Transmembrane protein 179B (tmem179b) from Danio rerio (Zebrafish).